The sequence spans 570 residues: Glutamate--tRNA ligase (570 aa).

Residues 107–117 carry the 'HIGH' region motif; the sequence is PNPDFVLHLGS.

The protein belongs to the class-I aminoacyl-tRNA synthetase family. Glutamate--tRNA ligase type 2 subfamily.

It is found in the cytoplasm. The enzyme catalyses tRNA(Glu) + L-glutamate + ATP = L-glutamyl-tRNA(Glu) + AMP + diphosphate. Its function is as follows. Catalyzes the attachment of glutamate to tRNA(Glu) in a two-step reaction: glutamate is first activated by ATP to form Glu-AMP and then transferred to the acceptor end of tRNA(Glu). In Pyrobaculum aerophilum (strain ATCC 51768 / DSM 7523 / JCM 9630 / CIP 104966 / NBRC 100827 / IM2), this protein is Glutamate--tRNA ligase.